We begin with the raw amino-acid sequence, 321 residues long: MIKKIAVLTSGGDAPGMNAAIRGVVRSALFEGLEVFGVYDGYYGLYHNKIKQLNRYSVSDVITRGGTFLGSARFPEFKNPEVRAKCAEILRSHGIDALVVIGGDGSYTGAKLLTEEHGIQCIGLPGTIDNDAPGTDYTIGYQTALETAVDAIDRLRDTSSSHQRISIVEIMGRHCSDLTINAALAGGCEYIVASEVEFDQEELIQQIERSIANGKRHAIIAITELITDVHELAKRIEERVHHETRATVLGHVQRGGSPCAFDRILASRMGVYAVDLLLQGKGGYCVGIQNEQLVHHDIIDAINNMRRSFKAELLDMNERLF.

Gly-12 lines the ATP pocket. Residues Arg-22–Arg-26 and Arg-55–Asp-60 each bind ADP. ATP is bound by residues Arg-73–Phe-74 and Gly-103–Ser-106. Residue Asp-104 participates in Mg(2+) binding. Position 127–129 (Thr-127–Asp-129) interacts with substrate. Asp-129 (proton acceptor) is an active-site residue. Residue Arg-156 coordinates ADP. Residues Arg-164 and Met-171–Arg-173 each bind substrate. Residues Gly-187–Glu-189 and Lys-215–His-217 contribute to the ADP site. Substrate contacts are provided by residues Glu-224, Arg-245, and His-251–Arg-254.

Belongs to the phosphofructokinase type A (PFKA) family. ATP-dependent PFK group I subfamily. Prokaryotic clade 'B1' sub-subfamily. Homotetramer. Requires Mg(2+) as cofactor.

The protein localises to the cytoplasm. It catalyses the reaction beta-D-fructose 6-phosphate + ATP = beta-D-fructose 1,6-bisphosphate + ADP + H(+). Its pathway is carbohydrate degradation; glycolysis; D-glyceraldehyde 3-phosphate and glycerone phosphate from D-glucose: step 3/4. Its activity is regulated as follows. Allosterically activated by ADP and other diphosphonucleosides, and allosterically inhibited by phosphoenolpyruvate. Its function is as follows. Catalyzes the phosphorylation of D-fructose 6-phosphate to fructose 1,6-bisphosphate by ATP, the first committing step of glycolysis. This Mannheimia succiniciproducens (strain KCTC 0769BP / MBEL55E) protein is ATP-dependent 6-phosphofructokinase.